A 322-amino-acid polypeptide reads, in one-letter code: NADH-cytochrome b5 reductase 2 (322 aa).

A helical transmembrane segment spans residues 31 to 48 (LAPIYAAVGITGVGVGLY). Residues 72-176 (QGWFDLKLSE…KGPIVKYPWE (105 aa)) form the FAD-binding FR-type domain. Position 179 to 214 (179 to 214 (KHNHICLIAGGTGITPMYQLAREIFKNPEDQTKVTL)) interacts with FAD.

It belongs to the flavoprotein pyridine nucleotide cytochrome reductase family. Requires FAD as cofactor.

It localises to the mitochondrion outer membrane. It carries out the reaction 2 Fe(III)-[cytochrome b5] + NADH = 2 Fe(II)-[cytochrome b5] + NAD(+) + H(+). May mediate the reduction of outer membrane cytochrome b5. This is NADH-cytochrome b5 reductase 2 (mcr1) from Aspergillus niger (strain ATCC MYA-4892 / CBS 513.88 / FGSC A1513).